Here is a 127-residue protein sequence, read N- to C-terminus: Large ribosomal subunit protein bL12 (127 aa).

Positions 96 to 127 (GTPSTLKEAVSKDDAEEAAKQLKEAGAEVEVK) are disordered. Positions 104 to 127 (AVSKDDAEEAAKQLKEAGAEVEVK) are enriched in basic and acidic residues.

The protein belongs to the bacterial ribosomal protein bL12 family. Homodimer. Part of the ribosomal stalk of the 50S ribosomal subunit. Forms a multimeric L10(L12)X complex, where L10 forms an elongated spine to which 2 to 4 L12 dimers bind in a sequential fashion. Binds GTP-bound translation factors.

In terms of biological role, forms part of the ribosomal stalk which helps the ribosome interact with GTP-bound translation factors. Is thus essential for accurate translation. This chain is Large ribosomal subunit protein bL12, found in Oleidesulfovibrio alaskensis (strain ATCC BAA-1058 / DSM 17464 / G20) (Desulfovibrio alaskensis).